A 114-amino-acid chain; its full sequence is Ribosome-binding factor A (114 aa).

This sequence belongs to the RbfA family. Monomer. Binds 30S ribosomal subunits, but not 50S ribosomal subunits or 70S ribosomes.

The protein resides in the cytoplasm. In terms of biological role, one of several proteins that assist in the late maturation steps of the functional core of the 30S ribosomal subunit. Associates with free 30S ribosomal subunits (but not with 30S subunits that are part of 70S ribosomes or polysomes). Required for efficient processing of 16S rRNA. May interact with the 5'-terminal helix region of 16S rRNA. This Listeria welshimeri serovar 6b (strain ATCC 35897 / DSM 20650 / CCUG 15529 / CIP 8149 / NCTC 11857 / SLCC 5334 / V8) protein is Ribosome-binding factor A.